A 273-amino-acid polypeptide reads, in one-letter code: Formamidopyrimidine-DNA glycosylase (273 aa).

The active-site Schiff-base intermediate with DNA is the P2. E3 (proton donor) is an active-site residue. K58 functions as the Proton donor; for beta-elimination activity in the catalytic mechanism. DNA-binding residues include H92, R111, and K153. The segment at 238 to 272 (KVYGREGQSCLSCSSTIIKIKHSGRSTFYCKTCQY) adopts an FPG-type zinc-finger fold. R262 serves as the catalytic Proton donor; for delta-elimination activity.

Belongs to the FPG family. In terms of assembly, monomer. Requires Zn(2+) as cofactor.

The catalysed reaction is Hydrolysis of DNA containing ring-opened 7-methylguanine residues, releasing 2,6-diamino-4-hydroxy-5-(N-methyl)formamidopyrimidine.. The enzyme catalyses 2'-deoxyribonucleotide-(2'-deoxyribose 5'-phosphate)-2'-deoxyribonucleotide-DNA = a 3'-end 2'-deoxyribonucleotide-(2,3-dehydro-2,3-deoxyribose 5'-phosphate)-DNA + a 5'-end 5'-phospho-2'-deoxyribonucleoside-DNA + H(+). Functionally, involved in base excision repair of DNA damaged by oxidation or by mutagenic agents. Acts as a DNA glycosylase that recognizes and removes damaged bases. Has a preference for oxidized purines, such as 7,8-dihydro-8-oxoguanine (8-oxoG). Has AP (apurinic/apyrimidinic) lyase activity and introduces nicks in the DNA strand. Cleaves the DNA backbone by beta-delta elimination to generate a single-strand break at the site of the removed base with both 3'- and 5'-phosphates. The protein is Formamidopyrimidine-DNA glycosylase of Rickettsia conorii (strain ATCC VR-613 / Malish 7).